We begin with the raw amino-acid sequence, 291 residues long: 4-hydroxy-tetrahydrodipicolinate synthase (291 aa).

Residue Thr-45 participates in pyruvate binding. Tyr-131 serves as the catalytic Proton donor/acceptor. The Schiff-base intermediate with substrate role is filled by Lys-159. Position 202 (Ile-202) interacts with pyruvate.

Belongs to the DapA family. In terms of assembly, homotetramer; dimer of dimers.

Its subcellular location is the cytoplasm. It catalyses the reaction L-aspartate 4-semialdehyde + pyruvate = (2S,4S)-4-hydroxy-2,3,4,5-tetrahydrodipicolinate + H2O + H(+). It functions in the pathway amino-acid biosynthesis; L-lysine biosynthesis via DAP pathway; (S)-tetrahydrodipicolinate from L-aspartate: step 3/4. Its function is as follows. Catalyzes the condensation of (S)-aspartate-beta-semialdehyde [(S)-ASA] and pyruvate to 4-hydroxy-tetrahydrodipicolinate (HTPA). The protein is 4-hydroxy-tetrahydrodipicolinate synthase of Methanococcoides burtonii (strain DSM 6242 / NBRC 107633 / OCM 468 / ACE-M).